Reading from the N-terminus, the 254-residue chain is HLA class II histocompatibility antigen, DQ alpha 1 chain (254 aa).

Positions 1–23 are cleaved as a signal peptide; it reads MILNKALMLGALALTTVMSPCGG. Positions 24–119 are alpha-1; the sequence is EDIVADHVAS…EVPEVTVFSK (96 aa). Topologically, residues 24 to 216 are extracellular; the sequence is EDIVADHVAS…IPAPMSELTE (193 aa). N-linked (GlcNAc...) asparagine glycosylation is found at Asn103 and Asn143. In terms of domain architecture, Ig-like C1-type spans 112 to 204; the sequence is PEVTVFSKSP…LDKPLLKHWE (93 aa). An alpha-2 region spans residues 120 to 203; the sequence is SPVTLGQPNI…GLDKPLLKHW (84 aa). The cysteines at positions 132 and 188 are disulfide-linked. Residues 204-216 are connecting peptide; it reads EPEIPAPMSELTE. The helical transmembrane segment at 217 to 239 threads the bilayer; it reads TVVCALGLSVGLVGIVVGTVFII. Topologically, residues 240 to 254 are cytoplasmic; it reads RGLRSVGASRHQGPL.

This sequence belongs to the MHC class II family. In terms of assembly, heterodimer of an alpha and a beta subunit; also referred as MHC class II molecule. In the endoplasmic reticulum (ER) it forms a heterononamer; 3 MHC class II molecules bind to a CD74 homotrimer (also known as invariant chain or HLA class II histocompatibility antigen gamma chain). In the endosomal/lysosomal system; CD74 undergoes sequential degradation by various proteases; leaving a small fragment termed CLIP on each MHC class II molecule. MHC class II molecule interacts with HLA_DM, and HLA_DO in B-cells, in order to release CLIP and facilitate the binding of antigenic peptides.

The protein resides in the cell membrane. The protein localises to the endoplasmic reticulum membrane. Its subcellular location is the golgi apparatus. It is found in the trans-Golgi network membrane. It localises to the endosome membrane. The protein resides in the lysosome membrane. Functionally, binds peptides derived from antigens that access the endocytic route of antigen presenting cells (APC) and presents them on the cell surface for recognition by the CD4 T-cells. The peptide binding cleft accommodates peptides of 10-30 residues. The peptides presented by MHC class II molecules are generated mostly by degradation of proteins that access the endocytic route, where they are processed by lysosomal proteases and other hydrolases. Exogenous antigens that have been endocytosed by the APC are thus readily available for presentation via MHC II molecules, and for this reason this antigen presentation pathway is usually referred to as exogenous. As membrane proteins on their way to degradation in lysosomes as part of their normal turn-over are also contained in the endosomal/lysosomal compartments, exogenous antigens must compete with those derived from endogenous components. Autophagy is also a source of endogenous peptides, autophagosomes constitutively fuse with MHC class II loading compartments. In addition to APCs, other cells of the gastrointestinal tract, such as epithelial cells, express MHC class II molecules and CD74 and act as APCs, which is an unusual trait of the GI tract. To produce a MHC class II molecule that presents an antigen, three MHC class II molecules (heterodimers of an alpha and a beta chain) associate with a CD74 trimer in the ER to form a heterononamer. Soon after the entry of this complex into the endosomal/lysosomal system where antigen processing occurs, CD74 undergoes a sequential degradation by various proteases, including CTSS and CTSL, leaving a small fragment termed CLIP (class-II-associated invariant chain peptide). The removal of CLIP is facilitated by HLA-DM via direct binding to the alpha-beta-CLIP complex so that CLIP is released. HLA-DM stabilizes MHC class II molecules until primary high affinity antigenic peptides are bound. The MHC II molecule bound to a peptide is then transported to the cell membrane surface. In B-cells, the interaction between HLA-DM and MHC class II molecules is regulated by HLA-DO. Primary dendritic cells (DCs) also to express HLA-DO. Lysosomal microenvironment has been implicated in the regulation of antigen loading into MHC II molecules, increased acidification produces increased proteolysis and efficient peptide loading. The chain is HLA class II histocompatibility antigen, DQ alpha 1 chain (HLA-DQA1) from Homo sapiens (Human).